A 220-amino-acid chain; its full sequence is Heptaprenyl diphosphate synthase component 1 (220 aa).

Heterodimer of component I and II.

The enzyme catalyses 4 isopentenyl diphosphate + (2E,6E)-farnesyl diphosphate = all-trans-heptaprenyl diphosphate + 4 diphosphate. Functionally, supplies heptaprenyl diphosphate, the precursor for the side chain of the isoprenoid quinone menaquinone-7 (MQ-7). This Geobacillus stearothermophilus (Bacillus stearothermophilus) protein is Heptaprenyl diphosphate synthase component 1 (hepS).